The sequence spans 528 residues: Beta-galactoside alpha-2,6-sialyltransferase 2 (528 aa).

Topologically, residues 1–10 (MKPNLKQWKQ) are cytoplasmic. Residues 11-31 (LMLFGIFAWGLLFLVIFIYFT) form a helical; Signal-anchor for type II membrane protein membrane-spanning segment. Residues 32 to 528 (DSNSAEPVPS…CPERNNFPPL (497 aa)) lie on the Lumenal side of the membrane. 3 N-linked (GlcNAc...) asparagine glycosylation sites follow: Asn-167, Asn-308, and Asn-338. Intrachain disulfides connect Cys-254/Cys-519, Cys-297/Cys-448, and Cys-466/Cys-477.

The protein belongs to the glycosyltransferase 29 family.

Its subcellular location is the golgi apparatus. The protein localises to the golgi stack membrane. The catalysed reaction is a beta-D-galactoside + CMP-N-acetyl-beta-neuraminate = an N-acetyl-alpha-neuraminyl-(2-&gt;6)-beta-D-galactosyl derivative + CMP + H(+). Transfers sialic acid from the donor of substrate CMP-sialic acid to galactose containing acceptor substrates. This is Beta-galactoside alpha-2,6-sialyltransferase 2 (ST6GAL2) from Gallus gallus (Chicken).